The primary structure comprises 56 residues: Large ribosomal subunit protein bL33 (56 aa).

The protein belongs to the bacterial ribosomal protein bL33 family.

The sequence is that of Large ribosomal subunit protein bL33 (rpmG) from Rickettsia prowazekii (strain Madrid E).